A 237-amino-acid chain; its full sequence is Ribosomal RNA small subunit methyltransferase G (237 aa).

S-adenosyl-L-methionine contacts are provided by residues Gly78, Phe83, 129–130 (AE), and Arg146.

The protein belongs to the methyltransferase superfamily. RNA methyltransferase RsmG family.

The protein resides in the cytoplasm. Specifically methylates the N7 position of a guanine in 16S rRNA. This chain is Ribosomal RNA small subunit methyltransferase G, found in Mesoplasma florum (strain ATCC 33453 / NBRC 100688 / NCTC 11704 / L1) (Acholeplasma florum).